The chain runs to 756 residues: Ent-kaurene synthase, chloroplastic (756 aa).

Mg(2+) is bound by residues Asp-507 and Asp-511. The short motif at Asp-507–Asp-511 is the DDXXD motif element. A helical transmembrane segment spans residues Tyr-606 to Val-622. Residues Asn-651, Thr-655, and Glu-659 each coordinate Mg(2+).

The protein belongs to the terpene synthase family. Mg(2+) serves as cofactor. As to expression, present in both leaves and flowers.

The protein localises to the plastid. It is found in the chloroplast membrane. It carries out the reaction ent-copalyl diphosphate = ent-kaur-16-ene + diphosphate. The protein operates within plant hormone biosynthesis; gibberellin biosynthesis. Involved in the biosynthesis of labdane-type diterpenoid including marrubiin and other labdane-related furanoid diterpenoids with potential applications as anti-diabetics, analgesics or vasorelaxants. Terpene synthase that produces ent-kaurene from ent-copalyl diphosphate (ent-CPP). In Marrubium vulgare (White horehound), this protein is Ent-kaurene synthase, chloroplastic.